Consider the following 187-residue polypeptide: MLKYNIRGENIEVTEPIRDYVEKKIDKLERYFTETPDANVHVNLKVYSDKNAKVEVTIPLPNLVLRAEETSGDLYASIDLIVDKLERQIRKHKTKVNRKFRDKGAERDYFAYSDVNGSTPPEENEGDFDLEIVRTKQFSLKPMDSEEAVLQMNLLGHSFYVYTDAETNGTNIVYSRKDGKYGLIETN.

The protein belongs to the HPF/YfiA ribosome-associated protein family. Long HPF subfamily. As to quaternary structure, interacts with 100S ribosomes.

It localises to the cytoplasm. Involved in 100S ribosome formation from 70S ribosomes; 100S ribosomes are probably translationally inactive. Ribosome hibernation may be used by the cell to decrease overall energy consumption under nutrient-limiting conditions. Unlike E.coli, 100S ribosomes are present from mid-exponential growth, peak during the transition from log to stationary phase and then decrease. The chain is Ribosome hibernation promotion factor from Listeria monocytogenes serotype 1/2a (strain 10403S).